The chain runs to 190 residues: Mitochondrial inner membrane protease subunit 1 (190 aa).

Catalysis depends on residues serine 40 and lysine 84.

The protein belongs to the peptidase S26 family. IMP1 subfamily. As to quaternary structure, component of the mitochondrial inner membrane peptidase (IMP) complex which at least consists of IMP1, IMP2 and SOM1.

It localises to the mitochondrion inner membrane. In terms of biological role, catalytic component of the mitochondrial inner membrane peptidase (IMP) complex. IMP catalyzes the removal of signal peptides required for the targeting of proteins from the mitochondrial matrix, across the inner membrane, into the inter-membrane space. The two catalytic IMP subunits seem to have non-overlapping substrate specificities. IMP1 substrates include nuclear encoded CYB2, mitochondrially encoded COX2, NADH-cytochrome b5 reductase and GUT2. The chain is Mitochondrial inner membrane protease subunit 1 (IMP1) from Saccharomyces cerevisiae (strain ATCC 204508 / S288c) (Baker's yeast).